A 138-amino-acid polypeptide reads, in one-letter code: 1,4-dihydroxy-2-naphthoyl-CoA hydrolase (138 aa).

Aspartate 14 is a catalytic residue.

The protein belongs to the 4-hydroxybenzoyl-CoA thioesterase family. DHNA-CoA hydrolase subfamily.

It catalyses the reaction 1,4-dihydroxy-2-naphthoyl-CoA + H2O = 1,4-dihydroxy-2-naphthoate + CoA + H(+). It functions in the pathway cofactor biosynthesis; phylloquinone biosynthesis. It participates in quinol/quinone metabolism; 1,4-dihydroxy-2-naphthoate biosynthesis; 1,4-dihydroxy-2-naphthoate from chorismate: step 7/7. Its function is as follows. Catalyzes the hydrolysis of 1,4-dihydroxy-2-naphthoyl-CoA (DHNA-CoA) to 1,4-dihydroxy-2-naphthoate (DHNA), a reaction involved in phylloquinone (vitamin K1) biosynthesis. The polypeptide is 1,4-dihydroxy-2-naphthoyl-CoA hydrolase (Rippkaea orientalis (strain PCC 8801 / RF-1) (Cyanothece sp. (strain PCC 8801))).